Here is a 363-residue protein sequence, read N- to C-terminus: DNA replication and repair protein RecF (363 aa).

30–37 (GPNGSGKT) is a binding site for ATP.

This sequence belongs to the RecF family.

It is found in the cytoplasm. In terms of biological role, the RecF protein is involved in DNA metabolism; it is required for DNA replication and normal SOS inducibility. RecF binds preferentially to single-stranded, linear DNA. It also seems to bind ATP. The sequence is that of DNA replication and repair protein RecF from Chlorobium phaeobacteroides (strain BS1).